We begin with the raw amino-acid sequence, 225 residues long: Methyl-CpG-binding domain-containing protein 6 (225 aa).

A disordered region spans residues 25–92 (GDGTLDSSAK…PGWRVEDKIR (68 aa)). The 76-residue stretch at 71–146 (RKRAAPGDNW…ENTYFNPDHF (76 aa)) folds into the MBD domain.

In terms of assembly, homodimer and heterodimer with MBD5. Interacts with DDM1 via its MBD domain. Interacts with NTF2, RPS2C, HDA6 and AGO4. As to expression, expressed in rosette leaves, buds, flowers, stems, mature seeds and roots.

The protein resides in the nucleus. Its subcellular location is the chromosome. It localises to the nucleolus. Functionally, transcriptional regulator that binds CpG, CpNpN and CpNpG (N is A, T, or C) islands in promoters regardless the DNA methylation status. Plays probably a role in gene silencing. May associate with histone deacetylase proteins (HDAC). Required for nucleolar dominance that consist in the silencing of rRNA genes inherited from one progenitor in genetic hybrids. Recruited to rRNA genes in a DRM2-dependent manner. Maintains gene silencing by interacting with RNA binding proteins (e.g. NTF2, RPS2C, HDA6 and AGO4) and by regulating DNA methylation status. The polypeptide is Methyl-CpG-binding domain-containing protein 6 (Arabidopsis thaliana (Mouse-ear cress)).